A 445-amino-acid polypeptide reads, in one-letter code: Phosphoglucosamine mutase (445 aa).

Catalysis depends on S102, which acts as the Phosphoserine intermediate. Residues S102, D241, D243, and D245 each coordinate Mg(2+). At S102 the chain carries Phosphoserine.

It belongs to the phosphohexose mutase family. Mg(2+) serves as cofactor. Post-translationally, activated by phosphorylation.

It carries out the reaction alpha-D-glucosamine 1-phosphate = D-glucosamine 6-phosphate. Functionally, catalyzes the conversion of glucosamine-6-phosphate to glucosamine-1-phosphate. In Shigella boydii serotype 4 (strain Sb227), this protein is Phosphoglucosamine mutase.